The following is a 98-amino-acid chain: C-X-C motif chemokine 10 (98 aa).

Residues 1 to 21 (MNPSAAVIFCLILLGLSGTQG) form the signal peptide. A Citrulline modification is found at Arg26. 2 cysteine pairs are disulfide-bonded: Cys30–Cys57 and Cys32–Cys74.

The protein belongs to the intercrine alpha (chemokine CxC) family. In terms of assembly, monomer, dimer, and tetramer. Interacts with CXCR3 (via N-terminus). Expressed in the spleen, thymus, lymph nodes and liver. Expressed in astrocytes, microglia, and neurons.

Its subcellular location is the secreted. In terms of biological role, pro-inflammatory cytokine that is involved in a wide variety of processes such as chemotaxis, differentiation, and activation of peripheral immune cells, regulation of cell growth, apoptosis and modulation of angiostatic effects. Plays thereby an important role during viral infections by stimulating the activation and migration of immune cells to the infected sites. Mechanistically, binding of CXCL10 to the CXCR3 receptor activates G protein-mediated signaling and results in downstream activation of phospholipase C-dependent pathway, an increase in intracellular calcium production and actin reorganization. In turn, recruitment of activated Th1 lymphocytes occurs at sites of inflammation. Activation of the CXCL10/CXCR3 axis also plays an important role in neurons in response to brain injury for activating microglia, the resident macrophage population of the central nervous system, and directing them to the lesion site. This recruitment is an essential element for neuronal reorganization. This chain is C-X-C motif chemokine 10 (Cxcl10), found in Mus musculus (Mouse).